The primary structure comprises 417 residues: Serine hydroxymethyltransferase (417 aa).

Residues L121 and G125–L127 contribute to the (6S)-5,6,7,8-tetrahydrofolate site. At K229 the chain carries N6-(pyridoxal phosphate)lysine. S355–F357 is a (6S)-5,6,7,8-tetrahydrofolate binding site.

The protein belongs to the SHMT family. As to quaternary structure, homodimer. It depends on pyridoxal 5'-phosphate as a cofactor.

It is found in the cytoplasm. It catalyses the reaction (6R)-5,10-methylene-5,6,7,8-tetrahydrofolate + glycine + H2O = (6S)-5,6,7,8-tetrahydrofolate + L-serine. The protein operates within one-carbon metabolism; tetrahydrofolate interconversion. Its pathway is amino-acid biosynthesis; glycine biosynthesis; glycine from L-serine: step 1/1. In terms of biological role, catalyzes the reversible interconversion of serine and glycine with tetrahydrofolate (THF) serving as the one-carbon carrier. This reaction serves as the major source of one-carbon groups required for the biosynthesis of purines, thymidylate, methionine, and other important biomolecules. Also exhibits THF-independent aldolase activity toward beta-hydroxyamino acids, producing glycine and aldehydes, via a retro-aldol mechanism. In Shewanella amazonensis (strain ATCC BAA-1098 / SB2B), this protein is Serine hydroxymethyltransferase.